A 74-amino-acid chain; its full sequence is Large ribosomal subunit protein bL31 (74 aa).

Belongs to the bacterial ribosomal protein bL31 family. Type A subfamily. As to quaternary structure, part of the 50S ribosomal subunit.

Its function is as follows. Binds the 23S rRNA. In Synechococcus sp. (strain JA-2-3B'a(2-13)) (Cyanobacteria bacterium Yellowstone B-Prime), this protein is Large ribosomal subunit protein bL31.